The chain runs to 82 residues: Escargot/snail protein homolog (82 aa).

C2H2-type zinc fingers lie at residues 1–5 (HLQFH), 18–40 (FSCK…IRTH), 44–66 (CKCD…IRTH), and 72–82 (FSCQHCHRAFA).

It belongs to the snail C2H2-type zinc-finger protein family.

The protein localises to the nucleus. The chain is Escargot/snail protein homolog from Bradysia coprophila (Dark-winged fungus gnat).